The following is a 101-amino-acid chain: Small ribosomal subunit protein uS14 (101 aa).

This sequence belongs to the universal ribosomal protein uS14 family. In terms of assembly, part of the 30S ribosomal subunit. Contacts proteins S3 and S10.

In terms of biological role, binds 16S rRNA, required for the assembly of 30S particles and may also be responsible for determining the conformation of the 16S rRNA at the A site. The sequence is that of Small ribosomal subunit protein uS14 from Sodalis glossinidius (strain morsitans).